We begin with the raw amino-acid sequence, 290 residues long: Transposon Ty3-G Gag polyprotein (290 aa).

Ser-2 is subject to N-acetylserine. The CCHC-type zinc finger occupies 265–282 (RLCFYCKKEGHRLNECRA).

It is found in the cytoplasm. Its function is as follows. Capsid protein (CA) is the structural component of the virus-like particle (VLP), forming the shell that encapsulates the retrotransposons dimeric RNA genome. Nucleocapsid protein p9 (NC) forms the nucleocore that coats the retro-elements dimeric RNA. Binds these RNAs through its zinc fingers. Promotes primer tRNA(i)-Met annealing to the multipartite primer-binding site (PBS), dimerization of Ty3 RNA and initiation of reverse transcription. This chain is Transposon Ty3-G Gag polyprotein (TY3A-G), found in Saccharomyces cerevisiae (strain ATCC 204508 / S288c) (Baker's yeast).